We begin with the raw amino-acid sequence, 1006 residues long: DNA ligase 4 (1006 aa).

The disordered stretch occupies residues 1-36 (MDSDDDYNGPADTNPRLEDEESDLDEKYPNRPRNHS). ATP is bound by residues E318, K320, L321, R325, E387, F427, E487, K492, K509, and K511. Catalysis depends on K320, which acts as the N6-AMP-lysine intermediate. Position 387 (E387) interacts with Mg(2+). E487 contributes to the Mg(2+) binding site. 2 consecutive BRCT domains span residues 718 to 811 (PSGN…PDSL) and 890 to 1002 (PSGW…GFQP).

This sequence belongs to the ATP-dependent DNA ligase family. Requires Mg(2+) as cofactor.

It is found in the nucleus. It carries out the reaction ATP + (deoxyribonucleotide)n-3'-hydroxyl + 5'-phospho-(deoxyribonucleotide)m = (deoxyribonucleotide)n+m + AMP + diphosphate.. In terms of biological role, DNA ligase involved in DNA non-homologous end joining (NHEJ); required for double-strand break (DSB) repair. The protein is DNA ligase 4 (lig4) of Aspergillus oryzae (strain ATCC 42149 / RIB 40) (Yellow koji mold).